Consider the following 163-residue polypeptide: UPF0134 protein MPN_139 (163 aa).

This sequence belongs to the UPF0134 family.

The polypeptide is UPF0134 protein MPN_139 (Mycoplasma pneumoniae (strain ATCC 29342 / M129 / Subtype 1) (Mycoplasmoides pneumoniae)).